Here is a 153-residue protein sequence, read N- to C-terminus: Putative phosphatidylglycerol/phosphatidylinositol transfer protein DDB_G0285639 (153 aa).

Positions 1–21 (MIIKILLLIISISLFLNISIG) are cleaved as a signal peptide. N-linked (GlcNAc...) asparagine glycosylation is found at Asn17, Asn61, Asn87, Asn117, and Asn140.

Belongs to the NPC2 family. In terms of assembly, monomer.

Its function is as follows. Catalyzes the intermembrane transfer of phosphatidylglycerol and phosphatidylinositol. The polypeptide is Putative phosphatidylglycerol/phosphatidylinositol transfer protein DDB_G0285639 (Dictyostelium discoideum (Social amoeba)).